Consider the following 342-residue polypeptide: Maltose regulon regulatory protein MalI (342 aa).

An HTH lacI-type domain is found at 7-61 (ITIHDVALAAGVSVSTVSLVLSGKGRISTATGERVNAAIEELGFVRNRQASALRG). Positions 9–28 (IHDVALAAGVSVSTVSLVLS) form a DNA-binding region, H-T-H motif.

Functionally, repressor for the malX and malY genes. Also regulates its own expression. Binds maltose as an inducer. In Escherichia coli (strain K12), this protein is Maltose regulon regulatory protein MalI (malI).